A 279-amino-acid chain; its full sequence is NAD kinase (279 aa).

Asp-57 functions as the Proton acceptor in the catalytic mechanism. NAD(+) is bound by residues 57 to 58, 133 to 134, Arg-159, Asp-161, and 172 to 177; these read DG, NE, and TAYNKS.

This sequence belongs to the NAD kinase family. Requires a divalent metal cation as cofactor.

It localises to the cytoplasm. It catalyses the reaction NAD(+) + ATP = ADP + NADP(+) + H(+). Functionally, involved in the regulation of the intracellular balance of NAD and NADP, and is a key enzyme in the biosynthesis of NADP. Catalyzes specifically the phosphorylation on 2'-hydroxyl of the adenosine moiety of NAD to yield NADP. The chain is NAD kinase from Streptococcus pyogenes serotype M28 (strain MGAS6180).